The sequence spans 329 residues: Beta-ketoacyl-[acyl-carrier-protein] synthase III (329 aa).

Residues cysteine 113 and histidine 255 contribute to the active site. The tract at residues 256 to 260 (QANQR) is ACP-binding. Asparagine 285 is a catalytic residue.

The protein belongs to the thiolase-like superfamily. FabH family. As to quaternary structure, homodimer.

It is found in the cytoplasm. It carries out the reaction malonyl-[ACP] + acetyl-CoA + H(+) = 3-oxobutanoyl-[ACP] + CO2 + CoA. Its pathway is lipid metabolism; fatty acid biosynthesis. Catalyzes the condensation reaction of fatty acid synthesis by the addition to an acyl acceptor of two carbons from malonyl-ACP. Catalyzes the first condensation reaction which initiates fatty acid synthesis and may therefore play a role in governing the total rate of fatty acid production. Possesses both acetoacetyl-ACP synthase and acetyl transacylase activities. Its substrate specificity determines the biosynthesis of branched-chain and/or straight-chain of fatty acids. This is Beta-ketoacyl-[acyl-carrier-protein] synthase III from Chlorobium phaeovibrioides (strain DSM 265 / 1930) (Prosthecochloris vibrioformis (strain DSM 265)).